Reading from the N-terminus, the 198-residue chain is Single-stranded DNA cytosine deaminase (198 aa).

Residues 1 to 30 carry the Bipartite nuclear localization signal motif; it reads MDSLLMKQRKFLYHFKNVRWAKGRHETYLC. Positions 2–26 are interaction with SUPT6H; sequence DSLLMKQRKFLYHFKNVRWAKGRHE. Positions 23–129 constitute a CMP/dCMP-type deaminase domain; it reads GRHETYLCYV…KAEPEGLRRL (107 aa). T27 carries the phosphothreonine; by PKA modification. Residue S38 is modified to Phosphoserine; by PKA. Positions 39–42 are important for interaction with CTNNBL1; the sequence is ATSF. H56 lines the Zn(2+) pocket. E58 serves as the catalytic Proton donor. The Zn(2+) site is built by C87 and C90. The segment at 88 to 116 is required for interaction with RNF126; that stretch reads YDCARHVADFLRGYPNLSLRIFAARLYFC. A Nuclear export signal motif is present at residues 183–198; it reads LYEVDDLRDAFRTLGL.

The protein belongs to the cytidine and deoxycytidylate deaminase family. In terms of assembly, interacts with CTNNBL1; the interaction is important for the immunoglobulin switch activity of AICDA. Interacts (via its NLS) with KPNA1. Interacts with PKA/PRKACA and PRKAR1A/PKR1. Interacts with SUPT6H, TRIM28 and NCL. Directly interacts with MCM3AP; this interaction may favor AICDA recruitment to immunoglobulin variable region genes, hence promoting somatic hypermutations. Requires Zn(2+) as cofactor. Ser-38 is the major site whereas Thr-27 is the minor site of phosphorylation. Phosphorylation regulates its class-switch recombination activity. Post-translationally, probably monoubiquitinated on several residues by RNF126. As to expression, expressed in thymus, lung, spleen, kidney, small intestine, lymph node and tonsil.

It is found in the nucleus. The protein localises to the cytoplasm. It catalyses the reaction a 2'-deoxycytidine in single-stranded DNA + H2O + H(+) = a 2'-deoxyuridine in single-stranded DNA + NH4(+). Its function is as follows. Single-stranded DNA-specific cytidine deaminase. Involved in somatic hypermutation (SHM), gene conversion, and class-switch recombination (CSR) in B-lymphocytes by deaminating C to U during transcription of Ig-variable (V) and Ig-switch (S) region DNA. Required for several crucial steps of B-cell terminal differentiation necessary for efficient antibody responses. May also play a role in the epigenetic regulation of gene expression by participating in DNA demethylation. This is Single-stranded DNA cytosine deaminase (AICDA) from Canis lupus familiaris (Dog).